The chain runs to 2104 residues: MVKKVIEKGRGVRGRDYSSKVWDFLEIDALNYFSESLKNHYLEELVVSPASTAEPFIRLSDLRFLSLLFLRNLRHSIMRGSGVTLEMLMLLAIPIFMHCLSYKNSIDRGFVLAKVIDGGEGIRKKQTENYGNFSYDCFLQFKRFLSVGRDGKREILEPYYLGLNKDISISASSSKEEREIRYDVTTPLPSGRWKARIMRRDSLLFGGDRFKGKTEGIQVVRGGRYLQDLVRFFKFYKNLVVSKNGSDCHQNNFDSLLLREICDKQDLGRLQAIRLGNNSLSSVVLYPFESESADSADPRRDGSAFPSEQEVFSNLYSFTSREKTILFRNSISGLDYGEDEGGFPVLHAYSQVRNQLINRLTNFLSIIRKSNLPLGGKIVIDVSNRIKSERVFFPSGMKKNMPFTKISGKKLRLASGGYFDFVEIFPTYFKASLEIPRETTNQNGNTNFLDELEGGGNLDSIYSLVRLYGRNRIIPLYSTYIFLLHDYFCALSTEYFFRIKYWLDGWTGGRVYISFTGIATEETVFKWKDDVERLSNEYVTSHIGQCRNVQSNLYRRLDATRNLYVSPVKKFLGEAMKYNLAELICRVSLVGNELLNKTGVSLRSTNRHTKKYFHRFLDVLFLSKMIVAEATRQKILIDTVDYCIEKLDDIDFEKLNKMDRIELDFFSSLSDGYIDEEILLFKTILEERKSFLVESRLLTSEKSVGSSTALKPASNFTSLGLSCIEAIRAGFSGEALSIMGRQNWNLFVCDLSRGGNSIRNIGESLPKNISDQMDEINNSPIRSRAGNNFIQRIKRGFFVGNCSNSYLDVLENFYLSSDEKAISSSDILSLIHLQLSDSLSSNFSKQTAGEVADHLLTPIQLISPNLHESATIVTHLDGLPNSISDLNGLLASLSSSPREATDSFLFSCSNDGVSLEEASRNSDSWSDHQRTQPRRNLLVLDRVNSEKFFKDGLDSRNGSPTSQVYRNGLSIEYFWEPKKLDTPYWSLRFSLFNGVTSRFIAGSIGEDVTRQDAGFADSSAREEATCPSHFINFNELSEDLNRYKISWIFWRDSIGENWSLLGDYIPLFFTPTWWRYFCDLITKAYPEIVLKISYDSNHDLRRISEGIARGLVGSAKGYLLRSLQRLGLIFGNNSINTISSETDLLILEKIPDKAEILHPGEWSVSQFSNRPISYCCILSILLVLLSLKHPLSAVSGSNFFHLWKRFATIDYLTDPMRGSYLRKVMYSPPTSQMLTRDLLIHSLNRFLNCVSNILFFLFVKNEIDSWIFRRESSDILDSNKELLTQHLVTTKILYRYASKSKFNYDLSSNKIFHEPYPQDRSNVLAYLLQFWQNDLLGHKIRKLDPAEKWAFSALGRDILFSATTRRRDSLLNMPCRDIPISLQSGLLPSKGILLVGPVETGRSSLIRDVASNSYFPVVKLPLKKFIYNRSFFNNVRGNFISKESVHRLNIVFEIAKEMSPCTLWIQDIHELNICRSYNKLEADPKFLLCQILKSIGHKLGNSDIRENVVIATTHVPARIDPALVAPNRLNQLINFRRSNGRQRQKELSILLRIKGFEVGANPTLLESTVSGTAGYSKRDLLLLANEALLIGTSKGRKFVCSNTIGLALHRQHSTVSDMGNEMESNSEWEISSYKMAEVKNSLTDISLTTFPFIGRDELKMRFYYLSNWYVEPSTTESTIDEFTMFLHLPELIAKLVARDSFQMDRGKEDNFIVIDKLVENDLNLACGVLENLSNNFPRPEICRGESRRSNSFPPPLPIGKPKYCSGVTSLSRSSKSLKRGRISSLTDFEMQQSPELRNSAAEISREITWSRKAWRLRFLRSGTYELMGVLSEPNHLYNLILLYYNQNYIPQQDFEFSKIRGKRSKWREKSGYLFSFEKSVTNGTDNSIKRLENRLDNMLLREQFLELGISGDSSNEYETHCDRLNEMTRLFGGRFIWDPMLLFQPDPNIPSLRRNLLSTKELARRLHTIYGMRRQRLQKMSNNKIKDFFLYSEENPKLKPDSSLNRRNNLPLEEEERDSEYVRETSSVDIHLQYPQIFTPVRLGCYAVAEDFPERFLRFRLLVHRNKWLRRNRSPFRDFLIYNMLLETYEYLSNPFRFGKASLD.

Residue 1396–1403 coordinates ATP; the sequence is GPVETGRS.

This sequence belongs to the Ycf2 family.

It localises to the plastid. The protein resides in the chloroplast stroma. Its function is as follows. Probable ATPase of unknown function. Its presence in a non-photosynthetic plant (Epifagus virginiana) and experiments in tobacco indicate that it has an essential function which is probably not related to photosynthesis. In Adiantum capillus-veneris (Maidenhair fern), this protein is Protein Ycf2 (ycf2-A).